The primary structure comprises 713 residues: Probable muscarinic acetylcholine receptor gar-1 (713 aa).

Topologically, residues 1-20 (MPNYTVPPDPADTSWDSPYS) are extracellular. A glycan (N-linked (GlcNAc...) asparagine) is linked at asparagine 3. A helical membrane pass occupies residues 21–41 (IPVQIVVWIIIIVLSLETIIG). Residues 42 to 66 (NAMVVMAYRIERNISKQVSNRYIVS) lie on the Cytoplasmic side of the membrane. A helical membrane pass occupies residues 67–87 (LAISDLIIGIEGFPFFTVYVL). Over 88–101 (NGDRWPLGWVACQT) the chain is Extracellular. A disulfide bridge connects residues cysteine 99 and cysteine 180. A helical membrane pass occupies residues 102-122 (WLFLDYTLCLVSILTVLLITA). Residues 123–144 (DRYLSVCHTAKYLKWQSPTKTQ) lie on the Cytoplasmic side of the membrane. The helical transmembrane segment at 145 to 165 (LLIVMSWLLPAIIFGIMIYGW) threads the bilayer. Residues 166–189 (QAMTGQSTSMSGAECSAPFLSNPY) are Extracellular-facing. Residues 190 to 210 (VNMGMYVAYYWTTLVAMLILY) traverse the membrane as a helical segment. Over 211 to 633 (KGIHQAAKNL…QTKAEKRAHK (423 aa)) the chain is Cytoplasmic. Disordered stretches follow at residues 256–350 (KEKA…SRRC), 381–403 (SRYS…VEKA), 427–475 (KNTD…KQAE), and 515–585 (LIRR…TDTF). 2 stretches are compositionally biased toward polar residues: residues 266-275 (SGYTSNQAGD) and 287-315 (PETS…NDQN). Composition is skewed to basic and acidic residues over residues 320–333 (EEER…RESN) and 393–403 (HENDEKEVEKA). A compositionally biased stretch (low complexity) spans 429 to 439 (TDSNNDSDTTS). A compositionally biased stretch (basic residues) spans 444–457 (RSRKYKKNKRPRSS). Positions 557–571 (LTVNNENRGETSSQP) are enriched in polar residues. A helical membrane pass occupies residues 634-656 (AFRTITFIVGFFAILWSPYYIMA). Over 657–670 (TVYGFCKGECIPSF) the chain is Extracellular. The helical transmembrane segment at 671–693 (LYTLSYYMCYLNSSGNPFAYALA) threads the bilayer. Residues 694–713 (NRQFRSAFMRMFRGNFNKVA) lie on the Cytoplasmic side of the membrane.

The protein belongs to the G-protein coupled receptor 1 family. Muscarinic acetylcholine receptor subfamily. Expressed in head region of the larva. In adults, expression is seen in the periventricularis magnocellularis (PVM) neuron.

It localises to the cell membrane. Its function is as follows. The muscarinic acetylcholine receptor mediates various cellular responses, including inhibition of adenylate cyclase, breakdown of phosphoinositides and modulation of potassium channels through the action of G proteins. Primary transducing effect is Pi turnover. The chain is Probable muscarinic acetylcholine receptor gar-1 (gar-1) from Caenorhabditis elegans.